A 187-amino-acid polypeptide reads, in one-letter code: UPF0301 protein CT0663 (187 aa).

This sequence belongs to the UPF0301 (AlgH) family.

The sequence is that of UPF0301 protein CT0663 from Chlorobaculum tepidum (strain ATCC 49652 / DSM 12025 / NBRC 103806 / TLS) (Chlorobium tepidum).